Here is a 57-residue protein sequence, read N- to C-terminus: UPF0391 membrane protein HNE_2348 (57 aa).

Helical transmembrane passes span 4 to 24 (WALT…GGIA) and 27 to 47 (AASI…ITFV).

Belongs to the UPF0391 family.

The protein resides in the cell membrane. The sequence is that of UPF0391 membrane protein HNE_2348 from Hyphomonas neptunium (strain ATCC 15444).